A 573-amino-acid polypeptide reads, in one-letter code: BICD family-like cargo adapter 1 (573 aa).

The interval 67–97 (ERPSDPGEHPQAEPGSLAEGAGPQPPPSQDP) is disordered. The span at 68-77 (RPSDPGEHPQ) shows a compositional bias: basic and acidic residues. The CC1 box signature appears at 113–117 (AARLG). Residues 118-376 (KALLERNQDM…QLWEAYCQVR (259 aa)) are a coiled coil. A disordered region spans residues 386–412 (DSADSAVSTDSSMDESSETSSAKDVPA). Residues 387 to 396 (SADSAVSTDS) are compositionally biased toward low complexity. Positions 440–525 (LSVEMTALKE…LEAWQDDMHR (86 aa)) form a coiled coil.

It belongs to the BICDR family. In terms of assembly, part of a tripartite complex with dynein and dynactin, acts an adapter linking the dynein motor complex and dynactin. Interacts with KIF1C. Interacts with RAB6A and RAB6B; interaction is specific to Rab6.

It localises to the cytoplasm. Its subcellular location is the cytoskeleton. The protein localises to the microtubule organizing center. The protein resides in the centrosome. Functionally, acts as an adapter protein linking the dynein motor complex to various cargos and converts dynein from a non-processive to a highly processive motor in the presence of dynactin. Facilitates the interaction between dynein and dynactin and activates dynein processivity (the ability to move along a microtubule for a long distance without falling off the track). Predominantly recruits 2 dyneins, which increases both the force and speed of the microtubule motor. Component of secretory vesicle machinery in developing neurons that acts as a regulator of neurite outgrowth. Regulates the secretory vesicle transport by controlling the accumulation of Rab6-containing secretory vesicles in the pericentrosomal region restricting anterograde secretory transport during the early phase of neuronal differentiation, thereby inhibiting neuritogenesis. The sequence is that of BICD family-like cargo adapter 1 (BICDL1) from Homo sapiens (Human).